The sequence spans 1453 residues: NRPS-like tryptophan epimerase fscC (1453 aa).

Positions 37–433 (SYGELSAMSS…ATHLIRNCVV (397 aa)) are adenylation. The 83-residue stretch at 544-626 (TGSRQSTRHK…LFHTSKSRFT (83 aa)) folds into the Carrier domain. S586 carries the post-translational modification O-(pantetheine 4'-phosphoryl)serine. The segment at 639–1053 (FPLSPVQRFF…KDVLESAGVF (415 aa)) is epimerization (E) domain. The tract at residues 1181-1391 (FFGLQSNERA…AGSSLHQHNQ (211 aa)) is condensation.

This sequence belongs to the NRP synthetase family. Pantetheine 4'-phosphate is required as a cofactor.

It participates in secondary metabolite biosynthesis. In terms of biological role, NRPS-like tryptophan epimerase; part of the fragmented gene cluster that mediates the biosynthesis of fusarochromene, a tryptophan-derived metabolite closely related to a group of mycotoxins including fusarochromanone. Within the pathway, fscC catalyzes the first step via epimerization of L-tryptophan to provide the intermediate D-tryptophan. D-tryptophan is subsequently hydroxylated by the tryptophan 6-hydroxylase fscE to yield 6-hydroxytryptophan. The pyrrole ring undergoes cleavaged by the tryptophan 2,3-dioxygenase fscD and is finally converted to 4-hydroxykyrunenine by the hydrolase fscH. The NRPS-like oxidoreductase fscA reduces the carboxyl group to primary alcohol and the DMATS-type prenyltransferase fscG performs prenylation, followed by the formation of a chromene ring catalyzed by the oxidoreductase fscI, which leads to desacetylfusarochromene. Epoxidation by fscF and rearrangement reactions of chromene double bonds convert compound desacetylfusarochromene to fusarochromanones. Although specific acetyltransferases were not found near the fsc gene cluster, several predicted enzymes containing the N-acetyltransferase superfamily domain are present in the genome of F.equiseti. These predicted enzymes may have the potential to convert desacetylfusarochromene to fusarochromene. This Fusarium equiseti (Fusarium scirpi) protein is NRPS-like tryptophan epimerase fscC.